A 305-amino-acid chain; its full sequence is UDP-N-acetylenolpyruvoylglucosamine reductase 2 (305 aa).

The 165-residue stretch at valine 33 to glycine 197 folds into the FAD-binding PCMH-type domain. Arginine 176 is a catalytic residue. Serine 226 serves as the catalytic Proton donor. Glutamate 296 is an active-site residue.

Belongs to the MurB family. FAD is required as a cofactor.

It localises to the cytoplasm. The enzyme catalyses UDP-N-acetyl-alpha-D-muramate + NADP(+) = UDP-N-acetyl-3-O-(1-carboxyvinyl)-alpha-D-glucosamine + NADPH + H(+). The protein operates within cell wall biogenesis; peptidoglycan biosynthesis. Its function is as follows. Cell wall formation. This Bacillus cereus (strain ATCC 14579 / DSM 31 / CCUG 7414 / JCM 2152 / NBRC 15305 / NCIMB 9373 / NCTC 2599 / NRRL B-3711) protein is UDP-N-acetylenolpyruvoylglucosamine reductase 2 (murB2).